Consider the following 877-residue polypeptide: MLGSLLLLAPLAGAAVIGSRADTKQCPGYKASNVQENDRSLTADLTLAGKPCNTYGTDLQNLKLLVEYQTDERLHVKIYDAEERVYQVPEKVTPRVDSGDGSSKDSALKFEYEEEPFSFTVKRDDEVLFDSSAENLIFQSQYLKLRTWLPENPYLYGLGEHTDPLRLSTTNYTRTFWNRDAYGTPANSNLYGTHPVYYDHRGESGTHGVFLLNSNGMDVFIDKTADGKQYLEYNALGGIFDFYFFTGSNPKEASIEYSKIVGLPAMQSYWTFGLHQCRYGYRDVYQVAEVVYNYTKAGIPLETMWTDIDYMDRRRVFSLDPDRFPLEKMRELVGYLHDHDQHYIVMVDPAVSVSDNGAFNRGLEQDVFLKTQNGSLYKGAVWPGVTAYPDWFHPDIQDYWNSEFSTFFNAETGVDIDGLWIDMNEASNFCPDPCTDPERYSSENNLPPAPPPVRSSSPRPLPGFPADFQPSSASRSQKRIVKAKVGLEGRDLLNPPYKIRNEAGSLSNKTINTGIVHAGEGYAEYDTHNLYGTMMSSSSREAMQYRRPEVRPLVITRSTYAGAGRDVGHWLGDNFSKWEHYRISIAEGLAFASMFQVPMVGADVCGFAGNTTEELCARWASLGAFFTFYRNHNEIGNIGQEFYVWPTVAESARKAIDIRYRLLDYIYTSFYKQSQTGEPFLQPVFYLYPEDENTFSIDLQFFYGDAILVSPVPDKGLTSVDAYFPDDIFYDWYTGTPVRGHGANITLSNIDITHIPLHIRGGSIIPIRSSSAMTTTELREKSFQLIIAPGLDGTASGSLYLDDGDSLEQKATLEVEFEYRKGVLHIDGKFELHASLVESVTLLGQGKGGSRARREDGTKKTIQTNLELSKPTEIKLE.

The N-terminal stretch at 1-14 (MLGSLLLLAPLAGA) is a signal peptide. Residues Asn-171, Asn-293, and Asn-373 are each glycosylated (N-linked (GlcNAc...) asparagine). The active-site Nucleophile is the Asp-422. Residue Glu-425 is part of the active site. Residues 432-476 (DPCTDPERYSSENNLPPAPPPVRSSSPRPLPGFPADFQPSSASRS) are disordered. A compositionally biased stretch (pro residues) spans 447–463 (PPAPPPVRSSSPRPLPG). Residue Asn-508 is glycosylated (N-linked (GlcNAc...) asparagine). Residue Asp-573 is the Proton donor of the active site. 3 N-linked (GlcNAc...) asparagine glycosylation sites follow: Asn-574, Asn-610, and Asn-744.

This sequence belongs to the glycosyl hydrolase 31 family.

It localises to the secreted. It carries out the reaction Hydrolysis of terminal, non-reducing (1-&gt;4)-linked alpha-D-glucose residues with release of alpha-D-glucose.. It catalyses the reaction Hydrolysis of terminal, non-reducing beta-D-glucosyl residues with release of beta-D-glucose.. In terms of biological role, glucosidase involved in the degradation of cellulosic biomass. Has both alpha- and beta-glucosidase activity. The chain is Probable alpha/beta-glucosidase agdC (agdC) from Aspergillus flavus (strain ATCC 200026 / FGSC A1120 / IAM 13836 / NRRL 3357 / JCM 12722 / SRRC 167).